A 523-amino-acid polypeptide reads, in one-letter code: BTB/POZ domain-containing protein 3 (523 aa).

The ANK repeat unit spans residues 85–114; it reads FDYSPLVLASLCGHEPVVKFLLENGALCER. 2 BTB domains span residues 167 to 223 and 306 to 373; these read TDIV…RYLY and HDAY…DIAP.

Interacts with cul3. Ubiquitinated and targeted for cul3-dependent degradation.

It localises to the cytoplasm. It functions in the pathway protein modification; protein ubiquitination. Functionally, probable substrate-specific adapter of an E3 ubiquitin-protein ligase complex which mediates the ubiquitination and subsequent proteasomal degradation of target proteins. The polypeptide is BTB/POZ domain-containing protein 3 (btb3) (Schizosaccharomyces pombe (strain 972 / ATCC 24843) (Fission yeast)).